Consider the following 300-residue polypeptide: MNQTYGRLVSRASIAATAMASALLLIKIFAWWYTGSVSILAALVDSLVDIAASLTNLLVVRYSLQPADDEHTFGHGKAESLAALAQSMFISGSALFLFLTSIQNLIKPTPMNDPGVGIGVTVIALICTIILVTFQRWVVRKTQSQAVRADMLHYQSDVMMNGAILIALGLSWYGWHRADALFALGIGIYILYSALRMGYEAVQSLLDRALPDAERQEIIDIVTSWPGVSGAHDLRTRQSGPTRFIQIHLEMEDNLPLVQAHFVADQVEQAILQRFPGSDVIIHQDPCSVVPREGRKFELV.

The chain crosses the membrane as a helical span at residues 24 to 44; that stretch reads LLIKIFAWWYTGSVSILAALV. The Zn(2+) site is built by aspartate 45 and aspartate 49. 2 consecutive transmembrane segments (helical) span residues 82-102 and 114-134; these read AALA…LTSI and PGVG…LVTF. Histidine 153 and aspartate 157 together coordinate Zn(2+). 2 helical membrane-spanning segments follow: residues 156–176 and 178–198; these read SDVM…YGWH and ADAL…LRMG.

The protein belongs to the cation diffusion facilitator (CDF) transporter (TC 2.A.4) family. FieF subfamily. As to quaternary structure, homodimer.

The protein localises to the cell inner membrane. It catalyses the reaction Zn(2+)(in) + H(+)(out) = Zn(2+)(out) + H(+)(in). The enzyme catalyses Cd(2+)(in) + H(+)(out) = Cd(2+)(out) + H(+)(in). It carries out the reaction Fe(2+)(in) + H(+)(out) = Fe(2+)(out) + H(+)(in). Functionally, divalent metal cation transporter which exports Zn(2+), Cd(2+) and possibly Fe(2+). May be involved in zinc and iron detoxification by efflux. The sequence is that of Cation-efflux pump FieF from Salmonella choleraesuis (strain SC-B67).